Here is a 104-residue protein sequence, read N- to C-terminus: Co-chaperonin GroES 1 (104 aa).

Belongs to the GroES chaperonin family. In terms of assembly, heptamer of 7 subunits arranged in a ring. Interacts with the chaperonin GroEL.

The protein localises to the cytoplasm. In terms of biological role, together with the chaperonin GroEL, plays an essential role in assisting protein folding. The GroEL-GroES system forms a nano-cage that allows encapsulation of the non-native substrate proteins and provides a physical environment optimized to promote and accelerate protein folding. GroES binds to the apical surface of the GroEL ring, thereby capping the opening of the GroEL channel. The chain is Co-chaperonin GroES 1 from Mesorhizobium japonicum (strain LMG 29417 / CECT 9101 / MAFF 303099) (Mesorhizobium loti (strain MAFF 303099)).